Consider the following 317-residue polypeptide: Melanoma-associated antigen 4 (317 aa).

A compositionally biased stretch (basic and acidic residues) spans 1–14 (MSSEQKSQHCKPEE). A disordered region spans residues 1 to 102 (MSSEQKSQHC…EEGPSTSPDA (102 aa)). The span at 66-82 (PQGASALPTTISFTCWR) shows a compositional bias: polar residues. The MAGE domain occupies 110 to 309 (LSNKVDELAH…IAYPSLREAA (200 aa)).

In terms of tissue distribution, expressed in many tumors of several types, such as melanoma, head and neck squamous cell carcinoma, lung carcinoma and breast carcinoma, but not in normal tissues except for testes and placenta.

Functionally, regulates cell proliferation through the inhibition of cell cycle arrest at the G1 phase. Also negatively regulates p53-mediated apoptosis. This is Melanoma-associated antigen 4 (MAGEA4) from Homo sapiens (Human).